A 284-amino-acid chain; its full sequence is Bifunctional protein FolD (284 aa).

Residues 164–166 (GRS) and S189 each bind NADP(+).

Belongs to the tetrahydrofolate dehydrogenase/cyclohydrolase family. In terms of assembly, homodimer.

The enzyme catalyses (6R)-5,10-methylene-5,6,7,8-tetrahydrofolate + NADP(+) = (6R)-5,10-methenyltetrahydrofolate + NADPH. It carries out the reaction (6R)-5,10-methenyltetrahydrofolate + H2O = (6R)-10-formyltetrahydrofolate + H(+). It participates in one-carbon metabolism; tetrahydrofolate interconversion. In terms of biological role, catalyzes the oxidation of 5,10-methylenetetrahydrofolate to 5,10-methenyltetrahydrofolate and then the hydrolysis of 5,10-methenyltetrahydrofolate to 10-formyltetrahydrofolate. This is Bifunctional protein FolD from Listeria monocytogenes serovar 1/2a (strain ATCC BAA-679 / EGD-e).